Consider the following 339-residue polypeptide: Retroviral-like aspartic protease 1 (339 aa).

Positions 1 to 188 are excised as a propeptide; the sequence is MRNPGGPGWA…SEPEEILFAN (188 aa). The tract at residues 34–53 is disordered; the sequence is VPAPFNSSRQGKNTAQPTEP. A compositionally biased stretch (polar residues) spans 38 to 53; that stretch reads FNSSRQGKNTAQPTEP. A glycan (N-linked (GlcNAc...) asparagine) is linked at N39. The helical transmembrane segment at 55–75 threads the bilayer; the sequence is LSSVIAPTLFCAFLYLACVTA. The Peptidase A2 domain maps to 205 to 286; sequence VRFLVDSGAQ…AEEAIIGTDV (82 aa). D210 is an active-site residue. Residue N274 is glycosylated (N-linked (GlcNAc...) asparagine). A propeptide spanning residues 325-339 is cleaved from the precursor; it reads LIEEEEGSSAPEGSH.

As to quaternary structure, homodimer. In terms of processing, undergoes autocleavage which is necessary for activation of the protein. As to expression, highly expressed in stratified epithelia in skin, tongue, esophagus, forestomach and vagina. Also expressed in trachea, urinary bladder and thymus. Undetectable in simple epithelia. Within the epidermis, expressed exclusively in the granular layer (at protein level). Levels are elevated in benign skin tumors but are down-regulated in squamous cell carcinomas.

The protein resides in the membrane. In terms of biological role, protease responsible for filaggrin processing, essential for the maintenance of a proper epidermis organization. This Mus musculus (Mouse) protein is Retroviral-like aspartic protease 1.